We begin with the raw amino-acid sequence, 604 residues long: Replication protein E1 (604 aa).

Residues 76–78 carry the Nuclear localization signal motif; it reads KRK. 2 positions are modified to phosphoserine; by host: S81 and S89. Positions 88–97 match the Nuclear export signal motif; the sequence is LSPRLESISL. The DNA-binding region stretch occupies residues 144–307; it reads GSGAIDIDYL…TILGHQNAEA (164 aa). The region spanning 406–556 is the SF3 helicase domain; sequence VNFITFLAAF…FPMKPDNTPQ (151 aa). 432 to 439 serves as a coordination point for ATP; the sequence is GPPNSGKS. K513 participates in a covalent cross-link: Glycyl lysine isopeptide (Lys-Gly) (interchain with G-Cter in SUMO). Residues 579–604 are disordered; the sequence is DQEEEGQHGESQRAFQCSARSANEHI. A compositionally biased stretch (polar residues) spans 591 to 604; it reads RAFQCSARSANEHI.

It belongs to the papillomaviridae E1 protein family. As to quaternary structure, can form hexamers. Interacts with E2 protein; this interaction increases E1 DNA binding specificity. Interacts with host DNA polymerase subunit POLA2. Interacts with host single stranded DNA-binding protein RPA1. Interacts with host TOP1; this interaction stimulates the enzymatic activity of TOP1. In terms of processing, phosphorylated. Sumoylated.

It localises to the host nucleus. It catalyses the reaction Couples ATP hydrolysis with the unwinding of duplex DNA by translocating in the 3'-5' direction.. The catalysed reaction is ATP + H2O = ADP + phosphate + H(+). Functionally, ATP-dependent DNA 3'-5' helicase required for initiation of viral DNA replication. It forms a complex with the viral E2 protein. The E1-E2 complex binds to the replication origin which contains binding sites for both proteins. During the initial step, a dimer of E1 interacts with a dimer of protein E2 leading to a complex that binds the viral origin of replication with high specificity. Then, a second dimer of E1 displaces the E2 dimer in an ATP-dependent manner to form the E1 tetramer. Following this, two E1 monomers are added to each half of the site, which results in the formation of two E1 trimers on the viral ori. Subsequently, two hexamers will be created. The double hexamer acts as a bi-directional helicase machinery and unwinds the viral DNA and then recruits the host DNA polymerase to start replication. In Human papillomavirus 12, this protein is Replication protein E1.